A 311-amino-acid chain; its full sequence is Pyrimidine-specific ribonucleoside hydrolase RihA (311 aa).

The active site involves His240.

This sequence belongs to the IUNH family. RihA subfamily.

Its function is as follows. Hydrolyzes with equal efficiency cytidine or uridine to ribose and cytosine or uracil, respectively. The protein is Pyrimidine-specific ribonucleoside hydrolase RihA of Escherichia coli O8 (strain IAI1).